The primary structure comprises 589 residues: PTS system mannitol-specific EIICB component (589 aa).

Over 1-25 (MEEKVSLKVRVQKLGTSLSNMVMPN) the chain is Cytoplasmic. Positions 14–347 (LGTSLSNMVM…LHADKSTEDS (334 aa)) constitute a PTS EIIC type-2 domain. The chain crosses the membrane as a helical span at residues 26–47 (IGAFIAWGVLTALFIADGYLPN). Over 48-51 (EQLA) the chain is Extracellular. A helical membrane pass occupies residues 52 to 72 (TVVGPMLTYLLPILIGYTGGY). Residues 73 to 135 (MIHGQRGAVV…PGFEMLVNNF (63 aa)) are Cytoplasmic-facing. The chain crosses the membrane as a helical span at residues 136-157 (SAGLVGFALLLLAFYAIGPVVS). The Extracellular segment spans residues 158–166 (TLTGAVGNG). A helical membrane pass occupies residues 167 to 187 (VEAIVNARLLPMANIIIEPAK). Topologically, residues 188-274 (VLFLNNALNH…VMMKPTLFLA (87 aa)) are cytoplasmic. A helical membrane pass occupies residues 275 to 294 (AMAGGISGTFTFQLLDAGLK). The Extracellular portion of the chain corresponds to 295-316 (SPASPGSIIAIIATAPKGVWPH). A helical transmembrane segment spans residues 317–338 (LNVLLGVLVAAVVSFLVAALIL). Topologically, residues 339–589 (HADKSTEDSL…YDKMAARMYK (251 aa)) are cytoplasmic. A PTS EIIB type-2 domain is found at 381 to 476 (EKIIFACDAG…SLTGASPIAE (96 aa)). C387 acts as the Phosphocysteine intermediate; for EIIB activity in catalysis. At C387 the chain carries Phosphocysteine; by EIIA.

In terms of assembly, homodimer.

The protein resides in the cell membrane. The enzyme catalyses D-mannitol(out) + N(pros)-phospho-L-histidyl-[protein] = D-mannitol 1-phosphate(in) + L-histidyl-[protein]. Its function is as follows. The phosphoenolpyruvate-dependent sugar phosphotransferase system (sugar PTS), a major carbohydrate active transport system, catalyzes the phosphorylation of incoming sugar substrates concomitantly with their translocation across the cell membrane. The enzyme II CmtAB PTS system is involved in D-mannitol transport. The protein is PTS system mannitol-specific EIICB component (mtlA) of Streptococcus pneumoniae serotype 4 (strain ATCC BAA-334 / TIGR4).